A 230-amino-acid chain; its full sequence is Tissue factor pathway inhibitor 2 (230 aa).

A signal peptide spans 1-22; it reads MDPAMPLQLWNLPLLLVGSVLG. BPTI/Kunitz inhibitor domains follow at residues 36-86, 96-146, and 156-206; these read CLLP…QQTC, CRSE…KGLC, and CSSP…HRAC. Intrachain disulfides connect Cys-36–Cys-86, Cys-45–Cys-69, Cys-61–Cys-82, Cys-96–Cys-146, Cys-105–Cys-129, Cys-121–Cys-142, Cys-156–Cys-206, Cys-165–Cys-189, and Cys-181–Cys-202. 2 N-linked (GlcNAc...) asparagine glycosylation sites follow: Asn-168 and Asn-178.

In terms of assembly, finds in a complex with ABCB1, TFPI2 and PPP2R3C; leading to the dephosphorylation of ABCB1. Highly expressed in placenta. Also expressed in liver and kidney.

It is found in the secreted. Its function is as follows. May play a role in the regulation of plasmin-mediated matrix remodeling. Inhibits trypsin, plasmin, factor VIIa/tissue factor and weakly factor Xa. Has no effect on thrombin. This is Tissue factor pathway inhibitor 2 (Tfpi2) from Mus musculus (Mouse).